The sequence spans 193 residues: dTTP/UTP pyrophosphatase (193 aa).

The Proton acceptor role is filled by D77.

It belongs to the Maf family. YhdE subfamily. The cofactor is a divalent metal cation.

It localises to the cytoplasm. It carries out the reaction dTTP + H2O = dTMP + diphosphate + H(+). It catalyses the reaction UTP + H2O = UMP + diphosphate + H(+). Functionally, nucleoside triphosphate pyrophosphatase that hydrolyzes dTTP and UTP. May have a dual role in cell division arrest and in preventing the incorporation of modified nucleotides into cellular nucleic acids. This Phocaeicola vulgatus (strain ATCC 8482 / DSM 1447 / JCM 5826 / CCUG 4940 / NBRC 14291 / NCTC 11154) (Bacteroides vulgatus) protein is dTTP/UTP pyrophosphatase.